A 198-amino-acid polypeptide reads, in one-letter code: Suppressor of cytokine signaling 2 (198 aa).

Residues 1–29 are disordered; sequence MTLRCLEPSGNGGEGTRSQWGTAGSAEEP. Positions 1-75 are interaction with AREL1; that stretch reads MTLRCLEPSG…PEGTFLIRDS (75 aa). Position 30 is a phosphoserine (Ser30). The 109-residue stretch at 48–156 folds into the SH2 domain; sequence WYWGSMTVNE…TVHLYLTKPL (109 aa). Ser52 carries the phosphoserine; by PKC modification. One can recognise an SOCS box domain in the interval 151 to 197; sequence YLTKPLYTSAPSLQHLCRLTINKCTGAIWGLPLPTRLKDYLEEYKFQ. Lys173 participates in a covalent cross-link: Glycyl lysine isopeptide (Lys-Gly) (interchain with G-Cter in ubiquitin).

As to quaternary structure, substrate-recognition component of the ECS(SOCS2) complex, composed of SOCS2, CUL5, ELOB, ELOC and RNF7/RBX2. Interacts with IGF1R. Interacts with DCUN1D1. Post-translationally, ubiquitinated; mediated by AREL1 and leading to its subsequent proteasomal degradation. Ubiquitination is dependent on its phosphorylation at Ser-52, by PKC. Ubiquitination is stimulated by LPS. Phosphorylation at Ser-52 by PKC facilitates its ubiquitination and proteasomal degradation. In terms of tissue distribution, high expression in heart, placenta, lung, kidney and prostate. Predominantly expressed in pulmonary epithelia cells, specifically type II pneumocytes.

The protein resides in the cytoplasm. It functions in the pathway protein modification; protein ubiquitination. Substrate-binding is prevented by the covalent inhibitor MN551 that cross-links with Cys-111. Also inhibited by a MN551 derivative, MN714, which contains a pivaloyloxymethyl that allows cell permeability. Functionally, substrate-recognition component of a cullin-5-RING E3 ubiquitin-protein ligase complex (ECS complex, also named CRL5 complex), which mediates the ubiquitination and subsequent proteasomal degradation of target proteins, such as EPOR and GHR. Specifically recognizes and binds phosphorylated proteins via its SH2 domain, promoting their ubiquitination. The ECS(SOCS2) complex acts as a key regulator of growth hormone receptor (GHR) levels by mediating ubiquitination and degradation of GHR, following GHR phosphorylation by JAK2. The ECS(SOCS2) also catalyzes ubiquitination and degradation of JAK2-phosphorylated EPOR. This is Suppressor of cytokine signaling 2 from Homo sapiens (Human).